The sequence spans 199 residues: OPA3-like protein (199 aa).

Positions 98–141 (RSSEKDKKKEEALQNRFKNLEEKLEVQQETINNLTNVIEAIQSS) form a coiled coil.

This sequence belongs to the OPA3 family.

This is OPA3-like protein from Dictyostelium discoideum (Social amoeba).